Consider the following 271-residue polypeptide: Homeobox protein pal-1 (271 aa).

Disordered regions lie at residues 1–25, 100–135, and 178–202; these read MSVDVKSEFSENDSSSSSSSPTNVN, PPLSNGSSSSDSGMYPSPNDLTPFPSTSSGIGASSS, and GSAGKERRASSDTKSLPTGPGTNNV. Composition is skewed to low complexity over residues 100 to 117 and 125 to 135; these read PPLSNGSSSSDSGMYPSP and STSSGIGASSS. Residues 189–202 are compositionally biased toward polar residues; that stretch reads DTKSLPTGPGTNNV. Residues 207–266 constitute a DNA-binding region (homeobox); sequence ADKYRMVYSDYQRLELEKEFHTSAFITSDRKSQLSTMLSLTERQIKIWFQNRRAKDRRDK.

The protein belongs to the Caudal homeobox family. As to quaternary structure, interacts with tir-1 and let-756.

It is found in the nucleus. The protein resides in the chromosome. It localises to the centromere. Its subcellular location is the kinetochore. Functionally, transcriptional activator. Interacts with promoter regions for tbx-8.9, tbx-9, elt-1, hnd-1, scrt-1, and vab-7 genes. Binds the sequence ATTTATGAC. Binds to the enhancer region of the hlh-1 gene promoter during embryonic body wall muscle development. Activates the gene for mab-5 in embryo development. Necessary for vab-7 expression in C blastomeres in the posterior of embryos. Required for posterior V6 neuroectoblast cell fate specification during postembryonic neurogenesis (patterning) which generates the characteristic ray lineage during male tail development. Binds to ced-3 promoter and activated expression which is crucial for tail-spike cell death. Has a role in E cell specification in endoderm development and body wall muscle development. The sequence is that of Homeobox protein pal-1 from Caenorhabditis briggsae.